The primary structure comprises 270 residues: Hydroxyethylthiazole kinase (270 aa).

Methionine 44 is a substrate binding site. Residues arginine 119 and threonine 165 each contribute to the ATP site. Glycine 192 is a binding site for substrate.

Belongs to the Thz kinase family. Mg(2+) is required as a cofactor.

The enzyme catalyses 5-(2-hydroxyethyl)-4-methylthiazole + ATP = 4-methyl-5-(2-phosphooxyethyl)-thiazole + ADP + H(+). Its pathway is cofactor biosynthesis; thiamine diphosphate biosynthesis; 4-methyl-5-(2-phosphoethyl)-thiazole from 5-(2-hydroxyethyl)-4-methylthiazole: step 1/1. Catalyzes the phosphorylation of the hydroxyl group of 4-methyl-5-beta-hydroxyethylthiazole (THZ). In Corynebacterium efficiens (strain DSM 44549 / YS-314 / AJ 12310 / JCM 11189 / NBRC 100395), this protein is Hydroxyethylthiazole kinase.